Here is a 96-residue protein sequence, read N- to C-terminus: Aspartyl/glutamyl-tRNA(Asn/Gln) amidotransferase subunit C (96 aa).

This sequence belongs to the GatC family. In terms of assembly, heterotrimer of A, B and C subunits.

It catalyses the reaction L-glutamyl-tRNA(Gln) + L-glutamine + ATP + H2O = L-glutaminyl-tRNA(Gln) + L-glutamate + ADP + phosphate + H(+). The enzyme catalyses L-aspartyl-tRNA(Asn) + L-glutamine + ATP + H2O = L-asparaginyl-tRNA(Asn) + L-glutamate + ADP + phosphate + 2 H(+). Its function is as follows. Allows the formation of correctly charged Asn-tRNA(Asn) or Gln-tRNA(Gln) through the transamidation of misacylated Asp-tRNA(Asn) or Glu-tRNA(Gln) in organisms which lack either or both of asparaginyl-tRNA or glutaminyl-tRNA synthetases. The reaction takes place in the presence of glutamine and ATP through an activated phospho-Asp-tRNA(Asn) or phospho-Glu-tRNA(Gln). The sequence is that of Aspartyl/glutamyl-tRNA(Asn/Gln) amidotransferase subunit C from Bacillus licheniformis (strain ATCC 14580 / DSM 13 / JCM 2505 / CCUG 7422 / NBRC 12200 / NCIMB 9375 / NCTC 10341 / NRRL NRS-1264 / Gibson 46).